Consider the following 1100-residue polypeptide: Isoleucine--tRNA ligase (1100 aa).

The short motif at 48-58 (PFATGLPHFGH) is the 'HIGH' region element. The 'KMSKS' region signature appears at 626 to 630 (KMSKS). Lysine 629 provides a ligand contact to ATP.

Belongs to the class-I aminoacyl-tRNA synthetase family. IleS type 2 subfamily. In terms of assembly, monomer. Requires Zn(2+) as cofactor.

It localises to the cytoplasm. It catalyses the reaction tRNA(Ile) + L-isoleucine + ATP = L-isoleucyl-tRNA(Ile) + AMP + diphosphate. Functionally, catalyzes the attachment of isoleucine to tRNA(Ile). As IleRS can inadvertently accommodate and process structurally similar amino acids such as valine, to avoid such errors it has two additional distinct tRNA(Ile)-dependent editing activities. One activity is designated as 'pretransfer' editing and involves the hydrolysis of activated Val-AMP. The other activity is designated 'posttransfer' editing and involves deacylation of mischarged Val-tRNA(Ile). This chain is Isoleucine--tRNA ligase, found in Treponema denticola (strain ATCC 35405 / DSM 14222 / CIP 103919 / JCM 8153 / KCTC 15104).